A 333-amino-acid polypeptide reads, in one-letter code: 4-hydroxyproline 2-epimerase (333 aa).

Cys-91 functions as the Proton acceptor in the catalytic mechanism. Substrate-binding positions include 92 to 93 (GH), His-225, and Asp-250. The active-site Proton donor is Cys-254. 255–256 (GT) is a substrate binding site.

This sequence belongs to the proline racemase family.

The catalysed reaction is trans-4-hydroxy-L-proline = cis-4-hydroxy-D-proline. Functionally, catalyzes the epimerization of trans-4-hydroxy-L-proline (t4LHyp) to cis-4-hydroxy-D-proline (c4DHyp). Is likely involved in a degradation pathway that converts t4LHyp to alpha-ketoglutarate. Displays no proline racemase activity. The sequence is that of 4-hydroxyproline 2-epimerase from Streptosporangium roseum (strain ATCC 12428 / DSM 43021 / JCM 3005 / KCTC 9067 / NCIMB 10171 / NRRL 2505 / NI 9100).